The sequence spans 165 residues: Ribosome maturation factor RimM (165 aa).

The region spanning 94–165 (EDEFYIADLT…YVILNYQREA (72 aa)) is the PRC barrel domain.

The protein belongs to the RimM family. As to quaternary structure, binds ribosomal protein uS19.

The protein resides in the cytoplasm. Its function is as follows. An accessory protein needed during the final step in the assembly of 30S ribosomal subunit, possibly for assembly of the head region. Essential for efficient processing of 16S rRNA. May be needed both before and after RbfA during the maturation of 16S rRNA. It has affinity for free ribosomal 30S subunits but not for 70S ribosomes. In Rickettsia conorii (strain ATCC VR-613 / Malish 7), this protein is Ribosome maturation factor RimM.